The chain runs to 355 residues: Natterin-1 (355 aa).

A signal peptide spans 1–18 (MIPSVLLVTLLLLSWTSA). Residues 19 to 27 (EKDLKVRVA) constitute a propeptide that is removed on maturation.

The protein belongs to the natterin family. Contains 4 disulfide bonds. As to expression, expressed by the venom gland.

It is found in the secreted. Its activity is regulated as follows. Inhibited by tissue-kallikrein inhibitor TKI and trasylol. Plasma kallikrein inhibitor PKSI527 and classical inhibitors of serine-, metallo-, thiol- or aspartate-peptidases evokes a minor inhibition of the peptide digestion. In terms of biological role, shows nociceptive, edema-inducing and kininogenase activity with release of kallidin from low molecular weight kininogen. The cleavage occurs at Met-Lys bonds. This chain is Natterin-1, found in Thalassophryne nattereri (Copper Joe toadfish).